We begin with the raw amino-acid sequence, 128 residues long: NADH-quinone oxidoreductase subunit A (128 aa).

Transmembrane regions (helical) follow at residues 12 to 32, 66 to 86, and 96 to 116; these read FAIFIISAIILCVLILTLSFL, FYLIAIFFVLFDIEAFYLYAW, and LGFYEAIIFVSVLLSGLVYLV.

This sequence belongs to the complex I subunit 3 family. NDH-1 is composed of 14 different subunits. Subunits NuoA, H, J, K, L, M, N constitute the membrane sector of the complex.

Its subcellular location is the cell membrane. It carries out the reaction a quinone + NADH + 5 H(+)(in) = a quinol + NAD(+) + 4 H(+)(out). In terms of biological role, NDH-1 shuttles electrons from NADH, via FMN and iron-sulfur (Fe-S) centers, to quinones in the respiratory chain. The immediate electron acceptor for the enzyme in this species is believed to be ubiquinone. Couples the redox reaction to proton translocation (for every two electrons transferred, four hydrogen ions are translocated across the cytoplasmic membrane), and thus conserves the redox energy in a proton gradient. The chain is NADH-quinone oxidoreductase subunit A from Baumannia cicadellinicola subsp. Homalodisca coagulata.